A 326-amino-acid chain; its full sequence is Serine protease 38 (326 aa).

Residues Met1–Ala32 form the signal peptide. A propeptide spans Leu33–Lys59 (activation peptide). Residues Ile60 to Glu293 enclose the Peptidase S1 domain. A disulfide bridge connects residues Cys85 and Cys101. His100 acts as the Charge relay system in catalysis. Asn125 is a glycosylation site (N-linked (GlcNAc...) asparagine). Asp150 functions as the Charge relay system in the catalytic mechanism. Cystine bridges form between Cys183–Cys251, Cys214–Cys230, and Cys241–Cys269. The active-site Charge relay system is the Ser245.

It belongs to the peptidase S1 family.

Its subcellular location is the secreted. This chain is Serine protease 38 (PRSS38), found in Homo sapiens (Human).